The sequence spans 286 residues: Formamidopyrimidine-DNA glycosylase (286 aa).

Proline 2 serves as the catalytic Schiff-base intermediate with DNA. The active-site Proton donor is glutamate 3. The active-site Proton donor; for beta-elimination activity is the lysine 61. DNA contacts are provided by histidine 103, arginine 122, and arginine 164. An FPG-type zinc finger spans residues 250–284 (NAYAQTGEPCGRCGTLIIRESFMNRGSHYCPNCQK). The active-site Proton donor; for delta-elimination activity is arginine 274.

The protein belongs to the FPG family. As to quaternary structure, monomer. The cofactor is Zn(2+).

It catalyses the reaction Hydrolysis of DNA containing ring-opened 7-methylguanine residues, releasing 2,6-diamino-4-hydroxy-5-(N-methyl)formamidopyrimidine.. The enzyme catalyses 2'-deoxyribonucleotide-(2'-deoxyribose 5'-phosphate)-2'-deoxyribonucleotide-DNA = a 3'-end 2'-deoxyribonucleotide-(2,3-dehydro-2,3-deoxyribose 5'-phosphate)-DNA + a 5'-end 5'-phospho-2'-deoxyribonucleoside-DNA + H(+). Involved in base excision repair of DNA damaged by oxidation or by mutagenic agents. Acts as a DNA glycosylase that recognizes and removes damaged bases. Has a preference for oxidized purines, such as 7,8-dihydro-8-oxoguanine (8-oxoG). Has AP (apurinic/apyrimidinic) lyase activity and introduces nicks in the DNA strand. Cleaves the DNA backbone by beta-delta elimination to generate a single-strand break at the site of the removed base with both 3'- and 5'-phosphates. This is Formamidopyrimidine-DNA glycosylase from Corynebacterium glutamicum (strain ATCC 13032 / DSM 20300 / JCM 1318 / BCRC 11384 / CCUG 27702 / LMG 3730 / NBRC 12168 / NCIMB 10025 / NRRL B-2784 / 534).